We begin with the raw amino-acid sequence, 283 residues long: Endochitinase At2g43620 (283 aa).

The first 28 residues, 1-28 (MATLRAMLKNAFILFLFTLTIMAKTVFS), serve as a signal peptide directing secretion. Positions 29 to 66 (QQCGTTGCAANLCCSRYGYCGTTDAYCGTGCRSGPCSS) constitute a Chitin-binding type-1 domain. 4 cysteine pairs are disulfide-bonded: Cys-31–Cys-42, Cys-36–Cys-48, Cys-41–Cys-55, and Cys-59–Cys-64. Positions 88 to 283 (DTIENVVTPA…GITPGANLSC (196 aa)) are catalytic. Glu-150 serves as the catalytic Proton donor. Asn-280 is a glycosylation site (N-linked (GlcNAc...) asparagine).

Belongs to the glycosyl hydrolase 19 family. Chitinase class I subfamily.

It carries out the reaction Random endo-hydrolysis of N-acetyl-beta-D-glucosaminide (1-&gt;4)-beta-linkages in chitin and chitodextrins.. The sequence is that of Endochitinase At2g43620 from Arabidopsis thaliana (Mouse-ear cress).